The primary structure comprises 165 residues: Crossover junction endodeoxyribonuclease RuvC (165 aa).

Residues aspartate 7, glutamate 68, and histidine 142 contribute to the active site. Mg(2+) is bound by residues aspartate 7, glutamate 68, and histidine 142.

It belongs to the RuvC family. As to quaternary structure, homodimer which binds Holliday junction (HJ) DNA. The HJ becomes 2-fold symmetrical on binding to RuvC with unstacked arms; it has a different conformation from HJ DNA in complex with RuvA. In the full resolvosome a probable DNA-RuvA(4)-RuvB(12)-RuvC(2) complex forms which resolves the HJ. Requires Mg(2+) as cofactor.

The protein localises to the cytoplasm. The enzyme catalyses Endonucleolytic cleavage at a junction such as a reciprocal single-stranded crossover between two homologous DNA duplexes (Holliday junction).. Its function is as follows. The RuvA-RuvB-RuvC complex processes Holliday junction (HJ) DNA during genetic recombination and DNA repair. Endonuclease that resolves HJ intermediates. Cleaves cruciform DNA by making single-stranded nicks across the HJ at symmetrical positions within the homologous arms, yielding a 5'-phosphate and a 3'-hydroxyl group; requires a central core of homology in the junction. The consensus cleavage sequence is 5'-(A/T)TT(C/G)-3'. Cleavage occurs on the 3'-side of the TT dinucleotide at the point of strand exchange. HJ branch migration catalyzed by RuvA-RuvB allows RuvC to scan DNA until it finds its consensus sequence, where it cleaves and resolves the cruciform DNA. The protein is Crossover junction endodeoxyribonuclease RuvC of Anaplasma marginale (strain Florida).